A 947-amino-acid polypeptide reads, in one-letter code: Vacuolar membrane protease (947 aa).

At 1-15 the chain is on the cytoplasmic side; sequence MRFKALLRAIFRFRK. A helical membrane pass occupies residues 16–36; that stretch reads TNFSILLIITYAIIIALLVFD. Residues 37 to 358 are Vacuolar-facing; that stretch reads RSRYKLDLPN…GLFFVVVDTK (322 aa). Asn-46, Asn-92, Asn-108, and Asn-121 each carry an N-linked (GlcNAc...) asparagine glycan. Zn(2+) contacts are provided by His-156 and Asp-168. The active-site Proton acceptor is Glu-200. Residues Glu-201, Glu-226, and His-300 each coordinate Zn(2+). The N-linked (GlcNAc...) asparagine glycan is linked to Asn-319. Residues 359 to 379 form a helical membrane-spanning segment; it reads HLFYADIFMLIVGPILLMMKA. Residues 380-391 lie on the Cytoplasmic side of the membrane; that stretch reads HLDKRRRLERSR. The helical transmembrane segment at 392–412 threads the bilayer; the sequence is LVQLRLLLSLGLSVVFLLLLT. Topologically, residues 413–428 are vacuolar; it reads KSLNSFNPFVYSADYR. Residues 429–449 form a helical membrane-spanning segment; it reads TPLTGLFLLFVTVNYLIVTLA. At 450 to 458 the chain is on the cytoplasmic side; that stretch reads ERLNPTESY. A helical membrane pass occupies residues 459–479; that stretch reads KTVAINQIFIIAWLMQLYITL. Over 480–489 the chain is Vacuolar; that stretch reads RMAKSDFTLT. A helical transmembrane segment spans residues 490-510; it reads GTYPLSIFSGCLIVALSLGLF. Residues 511–601 lie on the Cytoplasmic side of the membrane; sequence GTKNKAVNDA…DKNSDFSKHY (91 aa). Polar residues-rich tracts occupy residues 522-531 and 546-567; these read NSSVRYASSQ and NINQ…TDLH. Residues 522–573 are disordered; the sequence is NSSVRYASSQNDEDNPLPSQDRGENINQVRDTGNQEVTSNTNTDLHSNAEEV. The helical transmembrane segment at 602–622 threads the bilayer; sequence NWIVQFLCIVPISSFIFLFSL. Over 623 to 641 the chain is Vacuolar; sequence DYTLDAIHKMVQETTDDVQ. Residues 642 to 662 traverse the membrane as a helical segment; the sequence is LICIIITIGVILLALPILPFI. Residues 663–669 are Cytoplasmic-facing; the sequence is SKLNYQS. The chain crosses the membrane as a helical span at residues 670-690; the sequence is SVIIAIIGVLLFGKSLVMQPF. Over 691–947 the chain is Vacuolar; that stretch reads SEIAPLKVRF…LVVIKDKIQL (257 aa). Residues Asn-742, Asn-784, Asn-801, and Asn-833 are each glycosylated (N-linked (GlcNAc...) asparagine).

This sequence belongs to the peptidase M28 family. The cofactor is Zn(2+).

The protein resides in the vacuole membrane. Its function is as follows. May be involved in vacuolar sorting and osmoregulation. The chain is Vacuolar membrane protease from Candida glabrata (strain ATCC 2001 / BCRC 20586 / JCM 3761 / NBRC 0622 / NRRL Y-65 / CBS 138) (Yeast).